The following is a 398-amino-acid chain: Immunoglobulin heavy constant gamma 2A (398 aa).

Ig-like domains lie at 5–97, 120–219, and 228–324; these read PSVY…KKIE, PSVF…RTIS, and PQVY…KSFS. 3 disulfide bridges follow: Cys26–Cys81, Cys143–Cys203, and Cys249–Cys307. Residue Asn179 is glycosylated (N-linked (GlcNAc...) asparagine). A helical membrane pass occupies residues 345–362; sequence GLWTTITIFISLFLLSVC. The Cytoplasmic segment spans residues 363–398; it reads YSASVTLFKVKWIFSSVVELKQTISPDYRNMIGQGA.

Its subcellular location is the cell membrane. In Mus musculus (Mouse), this protein is Immunoglobulin heavy constant gamma 2A.